The sequence spans 102 residues: Small ribosomal subunit protein uS10 (102 aa).

Belongs to the universal ribosomal protein uS10 family. In terms of assembly, part of the 30S ribosomal subunit.

Involved in the binding of tRNA to the ribosomes. This is Small ribosomal subunit protein uS10 from Roseiflexus castenholzii (strain DSM 13941 / HLO8).